Here is a 191-residue protein sequence, read N- to C-terminus: GDP-mannose pyrophosphatase (191 aa).

Residues Y17, 38-40 (KRE), R67, and 85-87 (AGL) each bind GDP-alpha-D-mannose. The Nudix hydrolase domain occupies 43–180 (DRGNGATILL…EIRDGKTVLL (138 aa)). Mg(2+)-binding residues include A85, E100, and E104. A Nudix box motif is present at residues 86–106 (GLLDNDEPEVCIRKEAIEETG). GDP-alpha-D-mannose is bound by residues E104, E127, 150–151 (DE), and K176. E151 serves as a coordination point for Mg(2+).

It belongs to the Nudix hydrolase family. NudK subfamily. Homodimer. Mg(2+) serves as cofactor.

The catalysed reaction is GDP-alpha-D-mannose + H2O = alpha-D-mannose 1-phosphate + GMP + 2 H(+). Functionally, nucleoside diphosphate sugar hydrolase that hydrolyzes GDP-mannose as its preferred substrate, yielding GMP and mannose-1-phosphate. In Salmonella choleraesuis (strain SC-B67), this protein is GDP-mannose pyrophosphatase (nudK).